A 165-amino-acid chain; its full sequence is 2-halobenzoate 1,2-dioxygenase small subunit (165 aa).

The protein belongs to the bacterial ring-hydroxylating dioxygenase beta subunit family. Heterohexamer of 3 large (CbdA) subunits and 3 small (CbdB) subunits. The heterohexamer is part of 2-halobenzoate dioxygenase two component enzyme system. The other component is a NADH:acceptor reductase (CdbC).

It catalyses the reaction a 2-halobenzoate + NADH + O2 + H(+) = a halide anion + catechol + CO2 + NAD(+). It functions in the pathway xenobiotic degradation; benzoate degradation via CoA ligation. In terms of biological role, component of 2-halobenzoate dioxygenase multicomponent enzyme system which catalyzes the incorporation of both atoms of molecular oxygen into 2-halobenzoate to form catechol. This chain is 2-halobenzoate 1,2-dioxygenase small subunit (cbdB), found in Burkholderia cepacia (Pseudomonas cepacia).